Consider the following 54-residue polypeptide: Secreted virulence factor MC69 (54 aa).

The signal sequence occupies residues 1–16 (MKAAFVLALCASLASA). A disulfide bridge links cysteine 36 with cysteine 46.

Belongs to the MC69 virulence factor family.

It localises to the secreted. Functionally, secreted protein required for appressorial penetration of intact host epidermal cells and for pathogenicity. This is Secreted virulence factor MC69 from Pyricularia oryzae (strain 70-15 / ATCC MYA-4617 / FGSC 8958) (Rice blast fungus).